The sequence spans 278 residues: MSTHVDRKRITIPQIRSMKGKGSIVSLTAYTTPMAQMMDEFVDLIIVGDSTGMVAYGFNSTMSVTLDMMINHGAAVTRGVSKACVIVDMPFGSFQESPQQAYRNAARVLVETQAQGVKMEGGAELLETVDFLVRRGIPVMPHIGLTPQHANVQGGFKAQIRTEEEINAFIKLGRAFEEAGAFALLVEGAFEEAARKVTAAVTIPTVGIGASPECDGQVLVTEDILGLFSGYTPKFAKRYVDLSQPIKEAFSRYAHEVRSGEFPAMEHCFGVRKNSDGG.

Mg(2+) is bound by residues aspartate 49 and aspartate 88. 3-methyl-2-oxobutanoate-binding positions include 49 to 50 (DS), aspartate 88, and lysine 118. Glutamate 120 contacts Mg(2+). Glutamate 187 (proton acceptor) is an active-site residue.

This sequence belongs to the PanB family. As to quaternary structure, homodecamer; pentamer of dimers. The cofactor is Mg(2+).

The protein resides in the cytoplasm. It catalyses the reaction 3-methyl-2-oxobutanoate + (6R)-5,10-methylene-5,6,7,8-tetrahydrofolate + H2O = 2-dehydropantoate + (6S)-5,6,7,8-tetrahydrofolate. Its pathway is cofactor biosynthesis; (R)-pantothenate biosynthesis; (R)-pantoate from 3-methyl-2-oxobutanoate: step 1/2. Its function is as follows. Catalyzes the reversible reaction in which hydroxymethyl group from 5,10-methylenetetrahydrofolate is transferred onto alpha-ketoisovalerate to form ketopantoate. The protein is 3-methyl-2-oxobutanoate hydroxymethyltransferase 1 of Hahella chejuensis (strain KCTC 2396).